Here is a 339-residue protein sequence, read N- to C-terminus: Ketol-acid reductoisomerase (NADP(+)) (339 aa).

Residues 1-182 enclose the KARI N-terminal Rossmann domain; it reads MRVYYDRDAD…GGGRSGIIET (182 aa). NADP(+) is bound by residues 24-27, Lys48, Ser51, Thr53, and 83-86; these read YGSQ and DELQ. His108 is an active-site residue. Residue Gly134 coordinates NADP(+). Positions 183 to 328 constitute a KARI C-terminal knotted domain; the sequence is NFKEECETDL…AKLRGMMPWI (146 aa). Mg(2+) is bound by residues Asp191, Glu195, Glu227, and Glu231. Position 252 (Ser252) interacts with substrate.

This sequence belongs to the ketol-acid reductoisomerase family. Mg(2+) is required as a cofactor.

The catalysed reaction is (2R)-2,3-dihydroxy-3-methylbutanoate + NADP(+) = (2S)-2-acetolactate + NADPH + H(+). It catalyses the reaction (2R,3R)-2,3-dihydroxy-3-methylpentanoate + NADP(+) = (S)-2-ethyl-2-hydroxy-3-oxobutanoate + NADPH + H(+). It participates in amino-acid biosynthesis; L-isoleucine biosynthesis; L-isoleucine from 2-oxobutanoate: step 2/4. The protein operates within amino-acid biosynthesis; L-valine biosynthesis; L-valine from pyruvate: step 2/4. Its function is as follows. Involved in the biosynthesis of branched-chain amino acids (BCAA). Catalyzes an alkyl-migration followed by a ketol-acid reduction of (S)-2-acetolactate (S2AL) to yield (R)-2,3-dihydroxy-isovalerate. In the isomerase reaction, S2AL is rearranged via a Mg-dependent methyl migration to produce 3-hydroxy-3-methyl-2-ketobutyrate (HMKB). In the reductase reaction, this 2-ketoacid undergoes a metal-dependent reduction by NADPH to yield (R)-2,3-dihydroxy-isovalerate. The sequence is that of Ketol-acid reductoisomerase (NADP(+)) from Agrobacterium fabrum (strain C58 / ATCC 33970) (Agrobacterium tumefaciens (strain C58)).